The primary structure comprises 1488 residues: Chromosome partition protein MukB (1488 aa).

34–41 (GGNGAGKS) serves as a coordination point for ATP. 3 coiled-coil regions span residues 326-418 (LEAD…QYNQ), 444-472 (LDTF…QTAH), and 509-602 (RHLA…QRAP). Residues 666–783 (PGGAEDQRLN…SLPIFGRAAR (118 aa)) are flexible hinge. 3 coiled-coil regions span residues 835–923 (EAEI…AKLE), 977–1116 (EMLS…AKAG), and 1209–1265 (VEAI…LQSV). The interval 1049–1074 (ADSGAEERARQRRDELHAQLSNNRSR) is disordered. The segment covering 1051-1065 (SGAEERARQRRDELH) has biased composition (basic and acidic residues).

This sequence belongs to the SMC family. MukB subfamily. As to quaternary structure, homodimerization via its hinge domain. Binds to DNA via its C-terminal region. Interacts, and probably forms a ternary complex, with MukE and MukF via its C-terminal region. The complex formation is stimulated by calcium or magnesium. Interacts with tubulin-related protein FtsZ.

The protein resides in the cytoplasm. It is found in the nucleoid. Functionally, plays a central role in chromosome condensation, segregation and cell cycle progression. Functions as a homodimer, which is essential for chromosome partition. Involved in negative DNA supercoiling in vivo, and by this means organize and compact chromosomes. May achieve or facilitate chromosome segregation by condensation DNA from both sides of a centrally located replisome during cell division. In Salmonella gallinarum (strain 287/91 / NCTC 13346), this protein is Chromosome partition protein MukB.